The primary structure comprises 404 residues: Nesprin-4 (404 aa).

Disordered stretches follow at residues 1–91 and 277–347; these read MALS…GGKH and GQRG…GAPD. Topologically, residues 1 to 355 are cytoplasmic; it reads MALSLPLGPR…PDPASRQPLT (355 aa). Polar residues predominate over residues 39–52; it reads EESTSPEQAQTLGQ. The span at 307–320 shows a compositional bias: basic residues; sequence HQKRLARHQRHSLL. The KASH domain maps to 347 to 404; it reads DPASRQPLTFLLILFLLFLLLVGAMFLLPASGGPCCSHARIPRTPYLVLSYVNGLPPV. The chain crosses the membrane as a helical; Anchor for type IV membrane protein span at residues 356–376; it reads FLLILFLLFLLLVGAMFLLPA. Residues 377–404 lie on the Perinuclear space side of the membrane; sequence SGGPCCSHARIPRTPYLVLSYVNGLPPV.

It belongs to the nesprin family. In terms of assembly, core component of LINC complexes which are composed of inner nuclear membrane SUN domain-containing proteins coupled to outer nuclear membrane KASH domain-containing nesprins. SUN and KASH domain-containing proteins seem to bind each other promiscuously; however, differentially expression of LINC complex constituents can give rise to specific assemblies. Probably part of a SUN1-containing LINC complex. Interacts with kinesins KIF5B and KLC1. Post-translationally, the disulfid bond with SUN1 or SUN2 is required for stability of the respective LINC complex under tensile forces.

The protein localises to the nucleus outer membrane. Functionally, as a component of the LINC (LInker of Nucleoskeleton and Cytoskeleton) complex, involved in the connection between the nuclear lamina and the cytoskeleton. The nucleocytoplasmic interactions established by the LINC complex play an important role in the transmission of mechanical forces across the nuclear envelope and in nuclear movement and positioning. Behaves as a kinesin cargo, providing a functional binding site for kinesin-1 at the nuclear envelope. Hence may contribute to the establishment of secretory epithelial morphology by promoting kinesin-dependent apical migration of the centrosome and Golgi apparatus and basal localization of the nucleus. The polypeptide is Nesprin-4 (SYNE4) (Homo sapiens (Human)).